We begin with the raw amino-acid sequence, 349 residues long: Bifunctional protein FolKE (349 aa).

Positions 1–226 (MQTTYLSMGS…LFEIDSSKND (226 aa)) are 2-amino-4-hydroxy-6-hydroxymethyldihydropteridine pyrophosphokinase. Positions 226–349 (DSIVLIKDIP…KRMEFLESLL (124 aa)) are GTP cyclohydrolase 1.

In the N-terminal section; belongs to the HPPK family. This sequence in the C-terminal section; belongs to the GTP cyclohydrolase I family. In terms of assembly, homomer.

It carries out the reaction 6-hydroxymethyl-7,8-dihydropterin + ATP = (7,8-dihydropterin-6-yl)methyl diphosphate + AMP + H(+). The enzyme catalyses GTP + H2O = 7,8-dihydroneopterin 3'-triphosphate + formate + H(+). The protein operates within cofactor biosynthesis; 7,8-dihydroneopterin triphosphate biosynthesis; 7,8-dihydroneopterin triphosphate from GTP: step 1/1. It participates in cofactor biosynthesis; tetrahydrofolate biosynthesis; 2-amino-4-hydroxy-6-hydroxymethyl-7,8-dihydropteridine diphosphate from 7,8-dihydroneopterin triphosphate: step 4/4. This is Bifunctional protein FolKE (folKE) from Lactococcus lactis subsp. cremoris (strain MG1363).